The following is a 420-amino-acid chain: MAMTMTQKILASHAGLDSVKSGELIKVKLDLVLGNDITTPVAINEFNKIGSNKVFHKEKVAIVPDHFTPNKDIKSAEQCKCVREFAKDKDIKNYFEIGQMGIEHALIPEKGLAVCGDVIIGADSHTCTYGALGAFSTGVGSTDMAAGMATGEAWFKVPEAIKFVLNGKLSPWVSGKDIILHIIGMIGVDGALYNSMEFTGEGVGELSMDDRFTIANMAIEAGAKNGIFPVDEKTIEYVKEHSNRSYTVYEADEDAEYVKTIEIDLSKIPPTVAFPHIPENTRTIDEVGEIKIDQVVIGSCTNGRIGDLRVAAKVLKGRKVNSNVRTIIFPATQSIYLQAMKEGLLEIFIESGAVVSTPTCGPCLGGHMGILAKGERAVATTNRNFTGRMGHVESEVYLASPAVAAASAVTGKISSPEEVV.

Residues Cys300, Cys360, and Cys363 each contribute to the [4Fe-4S] cluster site.

This sequence belongs to the aconitase/IPM isomerase family. LeuC type 2 subfamily. As to quaternary structure, heterodimer of LeuC and LeuD. [4Fe-4S] cluster serves as cofactor.

The catalysed reaction is (2R,3S)-3-isopropylmalate = (2S)-2-isopropylmalate. It participates in amino-acid biosynthesis; L-leucine biosynthesis; L-leucine from 3-methyl-2-oxobutanoate: step 2/4. Catalyzes the isomerization between 2-isopropylmalate and 3-isopropylmalate, via the formation of 2-isopropylmaleate. This Clostridium kluyveri (strain ATCC 8527 / DSM 555 / NBRC 12016 / NCIMB 10680 / K1) protein is 3-isopropylmalate dehydratase large subunit.